The sequence spans 657 residues: Knob-associated histidine-rich protein (657 aa).

The signal sequence occupies residues 1–34 (MKSFKNKNTLRRKKAFPVFTKILLVSFLVWVLKC). Residue Asn42 is glycosylated (N-linked (GlcNAc...) asparagine). The span at 57–76 (AQKQHEHHHHHHHHHHHQHQ) shows a compositional bias: basic residues. 3 disordered regions span residues 57–138 (AQKQ…PSNE), 282–301 (AHDGSHGNLRGHDNKGSEGY), and 352–657 (VNKY…GCCG). The span at 99 to 108 (PQVHQQVHGQ) shows a compositional bias: low complexity. Residues 112–123 (HHHHHHHHHHLH) are compositionally biased toward basic residues. 2 stretches are compositionally biased toward basic and acidic residues: residues 357–378 (KHGDEKHHSSKKHEGNDGEGEK) and 399–408 (KDNEDAESVK). Over residues 409-425 (SKKHKSHDCEKKKSKKH) the composition is skewed to basic residues. Positions 426–435 (KDNEDAESVK) are enriched in basic and acidic residues. Residues 453 to 468 (AAKKLTKKIKIKKKTN) show a composition bias toward basic residues. Residues 473–496 (DGSKAHEKKENETKNTAGENKKVD) show a composition bias toward basic and acidic residues. The segment covering 497–508 (STSADNKSTNAA) has biased composition (polar residues). 2 stretches are compositionally biased toward basic and acidic residues: residues 512 to 523 (AKDKTQGGKTDK) and 551 to 578 (STSKEATKEASTSKEATKEASTSKEATK). The segment covering 590–614 (ASTTEGATKGASTTAGSTTGATTGA) has biased composition (low complexity). Positions 628–643 (AANNGEQVMSRGQAQL) are enriched in polar residues. Positions 648-657 (KKKKKRGCCG) are enriched in basic residues.

It localises to the secreted. KAHRP might mimick human histidine-rich glycoproteins to anchor host thrombospondin or a parasite analog in a binding complex with the endothelial cell receptor. The protein is Knob-associated histidine-rich protein (SD17) of Plasmodium falciparum (isolate NF7 / Ghana).